The chain runs to 172 residues: Small ribosomal subunit protein uS5 (172 aa).

In terms of domain architecture, S5 DRBM spans 16–79 (LKEKLVHINR…EDGKKNVIKV (64 aa)).

This sequence belongs to the universal ribosomal protein uS5 family. In terms of assembly, part of the 30S ribosomal subunit. Contacts proteins S4 and S8.

With S4 and S12 plays an important role in translational accuracy. In terms of biological role, located at the back of the 30S subunit body where it stabilizes the conformation of the head with respect to the body. The sequence is that of Small ribosomal subunit protein uS5 from Chlorobium phaeobacteroides (strain DSM 266 / SMG 266 / 2430).